We begin with the raw amino-acid sequence, 837 residues long: V-type proton ATPase 116 kDa subunit a 1 (837 aa).

Topologically, residues 1–388 (MGELFRSEEM…DAYGIGTYRE (388 aa)) are cytoplasmic. Residues T250 and T360 each carry the phosphothreonine modification. A Phosphotyrosine modification is found at Y364. The chain crosses the membrane as a helical span at residues 389-407 (INPAPYTIITFPFLFAVMF). Residues 408-409 (GD) lie on the Vacuolar side of the membrane. Residues 410-426 (FGHGILMTLFAVWMVLR) traverse the membrane as a helical segment. Over 427-441 (ESRILSQKNENEMFS) the chain is Cytoplasmic. A helical transmembrane segment spans residues 442-471 (TVFSGRYIILLMGVFSMYTGLIYNDCFSKS). Over 472 to 534 (LNIFGSSWSV…ATNKLTFLNS (63 aa)) the chain is Vacuolar. Residue N488 is glycosylated (N-linked (GalNAc...) asparagine). A helical transmembrane segment spans residues 535 to 554 (FKMKMSVILGIIHMLFGVSL). Topologically, residues 555–572 (SLFNHIYFKKPLNIYFGF) are cytoplasmic. Residues 573–593 (IPEIIFMTSLFGYLVILIFYK) form a helical membrane-spanning segment. Residues 594 to 638 (WTAYDAHTSENAPSLLIHFINMFLFSYPESGYSMLYSGQKGIQCF) are Vacuolar-facing. A helical membrane pass occupies residues 639–658 (LVVVALLCVPWMLLFKPLVL). The Cytoplasmic portion of the chain corresponds to 659–724 (RRQYLRRKHL…DTMVHQAIHT (66 aa)). A helical transmembrane segment spans residues 725–749 (IEYCLGCISNTASYLRLWALSLAHA). The Vacuolar segment spans residues 750 to 770 (QLSEVLWTMVIHIGLSVKSLA). Residues 771 to 809 (GGLVLFFFFTAFATLTVAILLIMEGLSAFLHALRLHWVE) form a helical membrane-spanning segment. Topologically, residues 810–837 (FQNKFYSGTGFKFLPFSFEHIREGKFEE) are cytoplasmic.

It belongs to the V-ATPase 116 kDa subunit family. As to quaternary structure, V-ATPase is a heteromultimeric enzyme made up of two complexes: the ATP-hydrolytic V1 complex and the proton translocation V0 complex. The V1 complex consists of three catalytic AB heterodimers that form a heterohexamer, three peripheral stalks each consisting of EG heterodimers, one central rotor including subunits D and F, and the regulatory subunits C and H. The proton translocation complex V0 consists of the proton transport subunit a, a ring of proteolipid subunits c9c'', rotary subunit d, subunits e and f, and the accessory subunits ATP6AP1/Ac45 and ATP6AP2/PRR. Interacts with SPAAR.

It is found in the cytoplasmic vesicle. The protein resides in the clathrin-coated vesicle membrane. The protein localises to the secretory vesicle. It localises to the synaptic vesicle membrane. Its subcellular location is the melanosome. Subunit of the V0 complex of vacuolar(H+)-ATPase (V-ATPase), a multisubunit enzyme composed of a peripheral complex (V1) that hydrolyzes ATP and a membrane integral complex (V0) that transports protons across cellular membranes. V-ATPase is responsible for the acidification of various organelles, such as lysosomes, endosomes, the trans-Golgi network, and secretory granules, including synaptic vesicles. In certain cell types, can be exported to the plasma membrane, where it is involved in the acidification of the extracellular environment. Required for assembly and activity of the vacuolar ATPase. Through its action on compartment acidification, plays an essential role in neuronal development in terms of integrity and connectivity of neurons. The sequence is that of V-type proton ATPase 116 kDa subunit a 1 (ATP6V0A1) from Homo sapiens (Human).